The chain runs to 445 residues: Glycerophosphocholine choline phosphodiesterase ENPP6 (445 aa).

A signal peptide spans 1-22 (MAGKLGVLLLALVLSLAQPASA). Aspartate 32, serine 71, and asparagine 92 together coordinate substrate. Residues aspartate 32 and serine 71 each contribute to the Zn(2+) site. Serine 71 functions as the Nucleophile in the catalytic mechanism. The residue at position 71 (serine 71) is a Phosphoserine. Asparagine 100 and asparagine 118 each carry an N-linked (GlcNAc...) asparagine glycan. A disulfide bridge links cysteine 142 with cysteine 154. Aspartate 193 is a binding site for substrate. Zn(2+) is bound by residues aspartate 193, histidine 197, aspartate 240, and histidine 241. Residue histidine 241 coordinates substrate. The N-linked (GlcNAc...) asparagine glycan is linked to asparagine 341. Residue histidine 356 coordinates substrate. Histidine 356 lines the Zn(2+) pocket. N-linked (GlcNAc...) asparagine glycosylation occurs at asparagine 406. Serine 421 carries GPI-anchor amidated serine lipidation. Residues 422-445 (SAPGAPPCACALVTVLLVLLAILA) constitute a propeptide, removed in mature form.

The protein belongs to the nucleotide pyrophosphatase/phosphodiesterase family. In terms of assembly, homodimer; disulfide-linked. Homotetramer. It depends on Zn(2+) as a cofactor.

Its subcellular location is the cell membrane. The enzyme catalyses sn-glycerol 3-phosphocholine + H2O = phosphocholine + glycerol + H(+). It catalyses the reaction a 1-acyl-sn-glycero-3-phosphocholine + H2O = a 1-acyl-sn-glycerol + phosphocholine + H(+). The catalysed reaction is a 1-O-alkyl-sn-glycero-3-phosphocholine + H2O = a 1-O-alkyl-sn-glycerol + phosphocholine + H(+). It carries out the reaction 1-dodecanoyl-sn-glycero-3-phosphocholine + H2O = 1-dodecanoyl-sn-glycerol + phosphocholine + H(+). The enzyme catalyses 1-hexadecanoyl-sn-glycero-3-phosphocholine + H2O = 1-hexadecanoyl-sn-glycerol + phosphocholine + H(+). It catalyses the reaction 1-(5Z,8Z,11Z,14Z-eicosatetraenoyl)-sn-glycero-3-phosphocholine + H2O = 1-(5Z,8Z,11Z,14Z-eicosatetraenoyl)-sn-glycerol + phosphocholine + H(+). The catalysed reaction is 1-tetradecanoyl-sn-glycero-3-phosphocholine + H2O = 1-tetradecanoyl-sn-glycerol + phosphocholine + H(+). It carries out the reaction sphing-4-enine-phosphocholine + H2O = sphing-4-enine + phosphocholine + H(+). The enzyme catalyses 1-(9Z-octadecenoyl)-sn-glycero-3-phosphocholine + H2O = 1-(9Z-octadecenoyl)-sn-glycerol + phosphocholine + H(+). It catalyses the reaction 1-(9Z,12Z)-octadecadienoyl-sn-glycero-3-phosphocholine + H2O = 1-(9Z,12Z-octadecadienoyl)-sn-glycerol + phosphocholine + H(+). The catalysed reaction is glycero-2-phosphocholine + H2O = phosphocholine + glycerol + H(+). With respect to regulation, inhibited by EDTA and EGTA in vitro. Its function is as follows. Choline-specific glycerophosphodiesterase that hydrolyzes glycerophosphocholine (GPC) and lysophosphatidylcholine (LPC) and contributes to supplying choline to the cells. Has a preference for LPC with short (12:0 and 14:0) or polyunsaturated (18:2 and 20:4) fatty acids. In vitro, hydrolyzes only choline-containing lysophospholipids, such as sphingosylphosphorylcholine (SPC), platelet-activating factor (PAF) and lysoPAF, but not other lysophospholipids. The protein is Glycerophosphocholine choline phosphodiesterase ENPP6 of Bos taurus (Bovine).